The chain runs to 260 residues: Glutathione S-transferase domain-containing protein DDB_G0274223 (260 aa).

The region spanning 7-96 is the GST N-terminal domain; the sequence is KVDYIFYTNN…YLAQKYNTFL (90 aa). The region spanning 102 to 233 is the GST C-terminal domain; it reads NPHENSDVIT…GFKTFNPSAL (132 aa).

The protein belongs to the GST superfamily.

The sequence is that of Glutathione S-transferase domain-containing protein DDB_G0274223 from Dictyostelium discoideum (Social amoeba).